The primary structure comprises 491 residues: Meiosis-specific nuclear structural protein 1 (491 aa).

An interaction with BBOF1 region spans residues 1-314; that stretch reads MATKKRALSF…QLEETLRQRD (314 aa). Coiled-coil stretches lie at residues 29–253 and 287–410; these read QVMN…RAQD and RVHE…AVEK. Y188 carries the phosphotyrosine modification.

Belongs to the MNS1 family. In terms of assembly, able to form oligomers. Microtubule inner protein component of sperm flagellar doublet microtubules. Interacts with ODAD1. Interacts with BBOF1. High expression in testis. Expressed in pachytene spermatocytes and post-meiotic spermatids.

The protein localises to the nucleus. It is found in the cytoplasm. Its subcellular location is the cytoskeleton. The protein resides in the flagellum axoneme. It localises to the cilium axoneme. In terms of biological role, microtubule inner protein (MIP) part of the dynein-decorated doublet microtubules (DMTs) in cilia axoneme, which is required for motile cilia beating. May play a role in the control of meiotic division and germ cell differentiation through regulation of pairing and recombination during meiosis. Required for sperm flagella assembly. May play a role in the assembly and function of the outer dynein arm-docking complex (ODA-DC). ODA-DC mediates outer dynein arms (ODA) binding onto the axonemal doublet microtubules. The polypeptide is Meiosis-specific nuclear structural protein 1 (Mns1) (Mus musculus (Mouse)).